The sequence spans 142 residues: Transcription antitermination protein NusB (142 aa).

This sequence belongs to the NusB family.

Its function is as follows. Involved in transcription antitermination. Required for transcription of ribosomal RNA (rRNA) genes. Binds specifically to the boxA antiterminator sequence of the ribosomal RNA (rrn) operons. This Roseiflexus sp. (strain RS-1) protein is Transcription antitermination protein NusB.